A 201-amino-acid polypeptide reads, in one-letter code: Adenylyl-sulfate kinase (201 aa).

Position 35–42 (35–42 (GLSGSGKS)) interacts with ATP. S109 serves as the catalytic Phosphoserine intermediate.

This sequence belongs to the APS kinase family.

The catalysed reaction is adenosine 5'-phosphosulfate + ATP = 3'-phosphoadenylyl sulfate + ADP + H(+). Its pathway is sulfur metabolism; hydrogen sulfide biosynthesis; sulfite from sulfate: step 2/3. Its function is as follows. Catalyzes the synthesis of activated sulfate. The chain is Adenylyl-sulfate kinase from Escherichia coli O139:H28 (strain E24377A / ETEC).